We begin with the raw amino-acid sequence, 847 residues long: Leucine--tRNA ligase (847 aa).

Positions 41 to 51 match the 'HIGH' region motif; that stretch reads PYPSGRIHMGH. Positions 619-623 match the 'KMSKS' region motif; it reads KMSKS. An ATP-binding site is contributed by K622.

It belongs to the class-I aminoacyl-tRNA synthetase family.

It is found in the cytoplasm. The enzyme catalyses tRNA(Leu) + L-leucine + ATP = L-leucyl-tRNA(Leu) + AMP + diphosphate. In Cereibacter sphaeroides (strain ATCC 17029 / ATH 2.4.9) (Rhodobacter sphaeroides), this protein is Leucine--tRNA ligase.